Reading from the N-terminus, the 92-residue chain is MAFLARCFGCQACRSVALLSGRYLQSRVWMGLPDSWPLLSLQQARGRARGNEYQPSNIKRKHKHGWVRRLSTPAGVQVILRRMLKGRKSLSH.

The N-terminal 46 residues, 1 to 46 (MAFLARCFGCQACRSVALLSGRYLQSRVWMGLPDSWPLLSLQQARG), are a transit peptide targeting the mitochondrion. Serine 71 carries the phosphoserine modification.

It belongs to the bacterial ribosomal protein bL34 family. Component of the mitochondrial ribosome large subunit (39S) which comprises a 16S rRNA and about 50 distinct proteins.

The protein localises to the mitochondrion. This Mus musculus (Mouse) protein is Large ribosomal subunit protein bL34m (Mrpl34).